The sequence spans 495 residues: Glutamyl-tRNA(Gln) amidotransferase subunit A (495 aa).

Active-site charge relay system residues include Lys-78 and Ser-158. Ser-182 serves as the catalytic Acyl-ester intermediate.

The protein belongs to the amidase family. GatA subfamily. In terms of assembly, heterotrimer of A, B and C subunits.

It carries out the reaction L-glutamyl-tRNA(Gln) + L-glutamine + ATP + H2O = L-glutaminyl-tRNA(Gln) + L-glutamate + ADP + phosphate + H(+). Functionally, allows the formation of correctly charged Gln-tRNA(Gln) through the transamidation of misacylated Glu-tRNA(Gln) in organisms which lack glutaminyl-tRNA synthetase. The reaction takes place in the presence of glutamine and ATP through an activated gamma-phospho-Glu-tRNA(Gln). This chain is Glutamyl-tRNA(Gln) amidotransferase subunit A, found in Dinoroseobacter shibae (strain DSM 16493 / NCIMB 14021 / DFL 12).